The chain runs to 155 residues: NADPH-dependent 7-cyano-7-deazaguanine reductase (155 aa).

The active-site Thioimide intermediate is the cysteine 52. The active-site Proton donor is the aspartate 59. Substrate contacts are provided by residues 74–76 (VES) and 93–94 (HE).

This sequence belongs to the GTP cyclohydrolase I family. QueF type 1 subfamily.

It is found in the cytoplasm. The catalysed reaction is 7-aminomethyl-7-carbaguanine + 2 NADP(+) = 7-cyano-7-deazaguanine + 2 NADPH + 3 H(+). It functions in the pathway tRNA modification; tRNA-queuosine biosynthesis. Catalyzes the NADPH-dependent reduction of 7-cyano-7-deazaguanine (preQ0) to 7-aminomethyl-7-deazaguanine (preQ1). In Syntrophobacter fumaroxidans (strain DSM 10017 / MPOB), this protein is NADPH-dependent 7-cyano-7-deazaguanine reductase.